The following is a 477-amino-acid chain: Bifunctional protein HldE (477 aa).

Positions 1 to 320 (MKDSLPAFEK…SLSDTHHSET (320 aa)) are ribokinase. 195 to 198 (NLHE) contributes to the ATP binding site. Asp264 is an active-site residue. Residues 346-477 (MTNGCFDILH…KIIENIMANQ (132 aa)) are cytidylyltransferase.

This sequence in the N-terminal section; belongs to the carbohydrate kinase PfkB family. The protein in the C-terminal section; belongs to the cytidylyltransferase family. In terms of assembly, homodimer.

The catalysed reaction is D-glycero-beta-D-manno-heptose 7-phosphate + ATP = D-glycero-beta-D-manno-heptose 1,7-bisphosphate + ADP + H(+). It carries out the reaction D-glycero-beta-D-manno-heptose 1-phosphate + ATP + H(+) = ADP-D-glycero-beta-D-manno-heptose + diphosphate. The protein operates within nucleotide-sugar biosynthesis; ADP-L-glycero-beta-D-manno-heptose biosynthesis; ADP-L-glycero-beta-D-manno-heptose from D-glycero-beta-D-manno-heptose 7-phosphate: step 1/4. It functions in the pathway nucleotide-sugar biosynthesis; ADP-L-glycero-beta-D-manno-heptose biosynthesis; ADP-L-glycero-beta-D-manno-heptose from D-glycero-beta-D-manno-heptose 7-phosphate: step 3/4. Catalyzes the phosphorylation of D-glycero-D-manno-heptose 7-phosphate at the C-1 position to selectively form D-glycero-beta-D-manno-heptose-1,7-bisphosphate. Functionally, catalyzes the ADP transfer from ATP to D-glycero-beta-D-manno-heptose 1-phosphate, yielding ADP-D-glycero-beta-D-manno-heptose. The sequence is that of Bifunctional protein HldE from Shewanella piezotolerans (strain WP3 / JCM 13877).